We begin with the raw amino-acid sequence, 808 residues long: Zinc finger protein 148 (808 aa).

Disordered stretches follow at residues S15–D86 and D131–K162. The span at A56–A73 shows a compositional bias: acidic residues. Residues H150–S159 show a composition bias toward basic residues. 4 consecutive C2H2-type zinc fingers follow at residues H180–H202, F208–H230, F236–H258, and Y264–H287. 3 disordered regions span residues R305 to T338, S596 to P617, and S705 to S736. 2 stretches are compositionally biased toward polar residues: residues S705 to P718 and Q725 to S736.

It belongs to the krueppel C2H2-type zinc-finger protein family.

It is found in the nucleus. Involved in transcriptional regulation. Represses the transcription of a number of genes. Required for primitive and definitive hematopoiesis during embryonic development. The protein is Zinc finger protein 148 (znf148) of Danio rerio (Zebrafish).